Consider the following 549-residue polypeptide: DNA mismatch repair protein MutL (549 aa).

It belongs to the DNA mismatch repair MutL/HexB family.

In terms of biological role, this protein is involved in the repair of mismatches in DNA. It is required for dam-dependent methyl-directed DNA mismatch repair. May act as a 'molecular matchmaker', a protein that promotes the formation of a stable complex between two or more DNA-binding proteins in an ATP-dependent manner without itself being part of a final effector complex. The sequence is that of DNA mismatch repair protein MutL from Pseudothermotoga lettingae (strain ATCC BAA-301 / DSM 14385 / NBRC 107922 / TMO) (Thermotoga lettingae).